The primary structure comprises 155 residues: Putative pre-16S rRNA nuclease (155 aa).

It belongs to the YqgF nuclease family.

It is found in the cytoplasm. Functionally, could be a nuclease involved in processing of the 5'-end of pre-16S rRNA. This is Putative pre-16S rRNA nuclease from Xanthomonas campestris pv. campestris (strain 8004).